Consider the following 311-residue polypeptide: Putative F-box protein At1g31090 (311 aa).

The region spanning 4–53 (GANSDSIPTDLIYEILSRLSVKPITRFRCVSKLWESIICRQDFTELFHNR) is the F-box domain. The segment at 287-311 (RPAEQNTSTSSREDHLVRTVKRKRA) is disordered.

This Arabidopsis thaliana (Mouse-ear cress) protein is Putative F-box protein At1g31090.